The primary structure comprises 69 residues: MMSKLGVLLTICLLLFPLTAVPLDGDQPADRPAERMQDDISSENHPMFDAIRGCCMPLSCMLLCEPCCG.

The signal sequence occupies residues 1–20 (MMSKLGVLLTICLLLFPLTA). The propeptide occupies 21-52 (VPLDGDQPADRPAERMQDDISSENHPMFDAIR). The residue at position 68 (C68) is a Cysteine amide.

This sequence belongs to the conotoxin M family. Post-translationally, is not hydroxylated. Contains 3 disulfide bonds. Expressed by the venom duct.

It is found in the secreted. Its function is as follows. Mu-conotoxins block voltage-gated sodium channels (Nav). This chain is Mu-conotoxin-like Am3.3, found in Conus amadis (Amadis cone).